The sequence spans 109 residues: Thioredoxin (109 aa).

The Thioredoxin domain maps to 2 to 109 (TNCIVELTDG…LKDFLNLYLK (108 aa)). An intrachain disulfide couples C33 to C36.

Belongs to the thioredoxin family.

Its function is as follows. Participates in various redox reactions through the reversible oxidation of its active center dithiol to a disulfide and catalyzes dithiol-disulfide exchange reactions. This is Thioredoxin (trxA) from Buchnera aphidicola subsp. Baizongia pistaciae (strain Bp).